Consider the following 290-residue polypeptide: HTH-type transcriptional activator RhaR (290 aa).

In terms of domain architecture, HTH araC/xylS-type spans 179-277 (DLIMSALQQS…GMTPRDYRQR (99 aa)). 2 consecutive DNA-binding regions (H-T-H motif) follow at residues 196–217 (ADFC…RQQT) and 244–267 (ISDI…TREA).

As to quaternary structure, binds DNA as a dimer.

It localises to the cytoplasm. In terms of biological role, activates expression of the rhaSR operon in response to L-rhamnose. This is HTH-type transcriptional activator RhaR from Yersinia pestis bv. Antiqua (strain Antiqua).